A 353-amino-acid polypeptide reads, in one-letter code: Putative transport protein YrrI (353 aa).

The next 8 helical transmembrane spans lie at 8 to 28, 37 to 57, 77 to 97, 165 to 185, 220 to 240, 243 to 263, 269 to 289, and 311 to 331; these read LLLW…FFML, LVIK…YLLL, IYVL…PVLI, FLIA…IELM, LLVC…FGLP, LILG…PFIG, LIAM…VFIL, and VVIM…GMIL.

Belongs to the autoinducer-2 exporter (AI-2E) (TC 2.A.86) family.

It localises to the cell membrane. In Bacillus subtilis (strain 168), this protein is Putative transport protein YrrI (yrrI).